The following is a 164-amino-acid chain: Lipoprotein signal peptidase (164 aa).

The next 4 helical transmembrane spans lie at 6 to 26 (LGVLAGIVALVLDQVTKLWLL), 39 to 59 (VLPFFDLVLAWNTGISYGWFS), 65 to 85 (GQILMLAFKAVAIVALAIWMA), and 88 to 108 (TTKLATIGLGLIIGGAIGNAI). Residues aspartate 118 and aspartate 140 contribute to the active site. Residues 141 to 161 (VAIVVGVAALLYDSLIGLPAA) traverse the membrane as a helical segment.

This sequence belongs to the peptidase A8 family.

The protein resides in the cell inner membrane. It carries out the reaction Release of signal peptides from bacterial membrane prolipoproteins. Hydrolyzes -Xaa-Yaa-Zaa-|-(S,diacylglyceryl)Cys-, in which Xaa is hydrophobic (preferably Leu), and Yaa (Ala or Ser) and Zaa (Gly or Ala) have small, neutral side chains.. Its pathway is protein modification; lipoprotein biosynthesis (signal peptide cleavage). Functionally, this protein specifically catalyzes the removal of signal peptides from prolipoproteins. In Rhodopseudomonas palustris (strain ATCC BAA-98 / CGA009), this protein is Lipoprotein signal peptidase.